We begin with the raw amino-acid sequence, 485 residues long: Skb1 localization factor 1 (485 aa).

Positions 1 to 200 (MSSIIQNPIE…VDDSDLTPHT (200 aa)) are sufficient for interaction with Skb1. Disordered regions lie at residues 117–230 (NAAN…MSRN), 286–416 (ETQH…LRRS), and 446–466 (TTQERKPVVKPDSIKTVKPEK). The segment covering 171–182 (SRSSRYSKTSDL) has biased composition (polar residues). A compositionally biased stretch (basic and acidic residues) spans 189–198 (RFVDDSDLTP). Composition is skewed to polar residues over residues 218 to 230 (GRSSSPDQMMSRN) and 341 to 363 (VGSSQPAEEFVGSSSSHGRQQDS). A Phosphoserine modification is found at Ser222. Basic and acidic residues predominate over residues 371–393 (SERSYRRVRDQYLSKPRLSDKNR). Over residues 394–416 (YSTFSEFPGQGTPSASQSNLRRS) the composition is skewed to polar residues. A compositionally biased stretch (basic and acidic residues) spans 447 to 464 (TQERKPVVKPDSIKTVKP). Residues 451–485 (KPVVKPDSIKTVKPEKKKSKGFFKKLMHKISHIFD) are required and sufficient for plasma membrane anchoring; lysine-rich, may bind to anionic lipids in the plasma membrane. A Phosphoserine modification is found at Ser458.

Interacts with Skb1.

The protein resides in the cell membrane. Functionally, acts as a membrane anchor for Skb1 in forming plasma membrane microdomains. Promotes mitotic entry by sequestering mitotic inhibitor Skb1 from its regulatory targets Cdr1 and Wee1. The chain is Skb1 localization factor 1 from Schizosaccharomyces pombe (strain 972 / ATCC 24843) (Fission yeast).